Reading from the N-terminus, the 360-residue chain is Peptide chain release factor 1 (360 aa).

Glutamine 235 carries the post-translational modification N5-methylglutamine. The tract at residues 286 to 313 (RQQAEASTRRNLLGSGDRSDRNRTYNFP) is disordered.

Belongs to the prokaryotic/mitochondrial release factor family. Post-translationally, methylated by PrmC. Methylation increases the termination efficiency of RF1.

The protein resides in the cytoplasm. Its function is as follows. Peptide chain release factor 1 directs the termination of translation in response to the peptide chain termination codons UAG and UAA. The chain is Peptide chain release factor 1 from Cronobacter sakazakii (strain ATCC BAA-894) (Enterobacter sakazakii).